The sequence spans 231 residues: tRNA (guanine-N(1)-)-methyltransferase (231 aa).

Glycine 112 is an S-adenosyl-L-methionine binding site.

The protein belongs to the RNA methyltransferase TrmD family. In terms of assembly, homodimer.

The protein localises to the cytoplasm. It carries out the reaction guanosine(37) in tRNA + S-adenosyl-L-methionine = N(1)-methylguanosine(37) in tRNA + S-adenosyl-L-homocysteine + H(+). Functionally, specifically methylates guanosine-37 in various tRNAs. This is tRNA (guanine-N(1)-)-methyltransferase from Chlorobium chlorochromatii (strain CaD3).